Consider the following 349-residue polypeptide: GMP reductase (349 aa).

108–131 (IDFLKIKKIFLLSSELKYICIDVA) is a binding site for NADP(+). Positions 181 and 183 each coordinate K(+). The active-site Thioimidate intermediate is Cys186. An NADP(+)-binding site is contributed by 216 to 239 (IISDGGCTVSGDIAKAFGGGADFV).

It belongs to the IMPDH/GMPR family. GuaC type 1 subfamily. In terms of assembly, homotetramer.

It carries out the reaction IMP + NH4(+) + NADP(+) = GMP + NADPH + 2 H(+). Functionally, catalyzes the irreversible NADPH-dependent deamination of GMP to IMP. It functions in the conversion of nucleobase, nucleoside and nucleotide derivatives of G to A nucleotides, and in maintaining the intracellular balance of A and G nucleotides. The polypeptide is GMP reductase (Buchnera aphidicola subsp. Acyrthosiphon pisum (strain 5A)).